The primary structure comprises 148 residues: UPF0756 membrane protein NMC1845 (148 aa).

4 helical membrane passes run 13 to 35 (LILLGVVSNNNSITISATILLLM), 50 to 70 (HGLNLGIILLTIGVLSPLVSG), 80 to 100 (FLNFKMISAVFIGIFVAWLAG), and 121 to 141 (VIGVAFMGGIPVGPLIAAGIL).

The protein belongs to the UPF0756 family.

The protein localises to the cell membrane. This is UPF0756 membrane protein NMC1845 from Neisseria meningitidis serogroup C / serotype 2a (strain ATCC 700532 / DSM 15464 / FAM18).